We begin with the raw amino-acid sequence, 506 residues long: NAD(P)H-quinone oxidoreductase subunit 2 (506 aa).

Transmembrane regions (helical) follow at residues 14–34, 42–62, 79–99, 108–128, 132–152, 167–187, 206–226, 240–260, 276–296, 302–322, 330–350, 374–394, and 409–429; these read AIIPEAFILLGIVGTLLVDLA, WAPIICYLSIGSSLVSLALQW, LAIAFRAIISLSTLISLLISW, PIGEFAAIVLSATLGAMLLCG, LISVFISLETLSVASYLLSGY, LLVGSAAAAVYLYGSSFLYGL, FITSLALVFVLSTVAFKIAAV, PTPVVAFLSVGSKTAGFAFAI, LLFTILAILSMALGNVVALAQ, MLAYSSIGQAGFVMIGIVSGT, VLYLAAYLFMNLGAFSCVILF, LGLSLCLLSLGGLPPMLGFFG, and LLVIVGLVTSVISIYYYISVI.

Belongs to the complex I subunit 2 family. In terms of assembly, NDH-1 can be composed of about 15 different subunits; different subcomplexes with different compositions have been identified which probably have different functions.

The protein localises to the cellular thylakoid membrane. It carries out the reaction a plastoquinone + NADH + (n+1) H(+)(in) = a plastoquinol + NAD(+) + n H(+)(out). The enzyme catalyses a plastoquinone + NADPH + (n+1) H(+)(in) = a plastoquinol + NADP(+) + n H(+)(out). Its function is as follows. NDH-1 shuttles electrons from an unknown electron donor, via FMN and iron-sulfur (Fe-S) centers, to quinones in the respiratory and/or the photosynthetic chain. The immediate electron acceptor for the enzyme in this species is believed to be plastoquinone. Couples the redox reaction to proton translocation, and thus conserves the redox energy in a proton gradient. Cyanobacterial NDH-1 also plays a role in inorganic carbon-concentration. The polypeptide is NAD(P)H-quinone oxidoreductase subunit 2 (Prochlorococcus marinus (strain AS9601)).